A 125-amino-acid chain; its full sequence is MORF4 family-associated protein 1 (125 aa).

The segment at 76 to 99 (ESALNHLQGAGGAEPRGPRAEKAD) is disordered. Residues 94–124 (RAEKADEKAQEMAKMAEMLVQLVRRIEKSES) adopt a coiled-coil conformation.

It belongs to the MORF4 family-associated protein family. Found in a complex composed of MORF4L1, MRFAP1 and RB1. Interacts via its N-terminus with MORF4L1. Interacts with CSTB and MORF4L2. Widely expressed in all tissues examined and as early as 7 days during embryonic development.

Its subcellular location is the nucleus. It is found in the cytoplasm. It localises to the perinuclear region. The chain is MORF4 family-associated protein 1 from Mus musculus (Mouse).